We begin with the raw amino-acid sequence, 387 residues long: TSC22 domain family protein 4 (387 aa).

Disordered stretches follow at residues methionine 1–tyrosine 85 and isoleucine 135–glycine 232. Over residues serine 28–aspartate 51 the composition is skewed to pro residues. A Phosphothreonine modification is found at threonine 57. 2 positions are modified to phosphoserine: serine 62 and serine 165. Position 183 is a phosphothreonine (threonine 183). Residues serine 187 and serine 189 each carry the phosphoserine modification. Residue threonine 223 is modified to Phosphothreonine. 3 positions are modified to phosphoserine: serine 254, serine 258, and serine 271. The tract at residues leucine 336–leucine 357 is leucine-zipper. Serine 362 is subject to Phosphoserine. The interval glutamine 368–isoleucine 387 is disordered.

It belongs to the TSC-22/Dip/Bun family. In terms of assembly, forms a homodimer or heterodimer. Forms a heterodimer with TSC22D1 isoforms 1 and 2. Interacts with NRBP1.

Its subcellular location is the nucleus. It is found in the cytoplasm. The protein localises to the cell projection. It localises to the dendrite. The protein resides in the synapse. Binds DNA and acts as a transcriptional repressor. Involved in the regulation of systematic glucose homeostasis and insulin sensitivity, via transcriptional repression of downstream insulin signaling targets such as OBP2A/LCN13. Acts as a negative regulator of lipogenic gene expression in hepatocytes and thereby mediates the control of very low-density lipoprotein release. May play a role in neurite elongation and survival. The protein is TSC22 domain family protein 4 of Rattus norvegicus (Rat).